The chain runs to 302 residues: tRNA pseudouridine synthase B (302 aa).

Residue D42 is the Nucleophile of the active site.

This sequence belongs to the pseudouridine synthase TruB family. Type 1 subfamily.

The enzyme catalyses uridine(55) in tRNA = pseudouridine(55) in tRNA. Functionally, responsible for synthesis of pseudouridine from uracil-55 in the psi GC loop of transfer RNAs. This chain is tRNA pseudouridine synthase B, found in Leifsonia xyli subsp. xyli (strain CTCB07).